The following is a 338-amino-acid chain: Short-chain dehydrogenase/reductase phmF (338 aa).

Residues L46, R71, D96, and N123 each coordinate NADP(+). S177 functions as the Proton donor in the catalytic mechanism. The NADP(+) site is built by Y211 and K215. Y211 functions as the Proton acceptor in the catalytic mechanism. The Lowers pKa of active site Tyr role is filled by K215.

Belongs to the short-chain dehydrogenases/reductases (SDR) family.

Its pathway is mycotoxin biosynthesis. Functionally, short-chain dehydrogenase/reductase; part of the gene cluster that mediates the biosynthesis of the mycotoxins phomacins, leucine-derived cytochalasans with potent actin polymerization-inhibitory activities and monocot-specific antigerminative activities. The first step in the pathway is catalyzed by the hybrid PKS-NRPS phmA, assisted by the enoyl reductase phmE, that are responsible for fusion of the leucine precursor and the polyketide backbone to produce a 2-pyrrolidone intermediate. The polyketide synthase module (PKS) of phmA is responsible for the synthesis of the polyketide backbone and the downstream nonribosomal peptide synthetase (NRPS) amidates the carboxyl end of the polyketide with the leucine precursor. Because phmA lacks a designated enoylreductase (ER) domain, the required activity is provided the enoyl reductase phmE. Reduction by the hydrolyase phmG, followed by dehydration and intra-molecular Diels-Alder cyclization by the Diels-Alderase phmD then yield the required isoindolone-fused macrocycle. A number of oxidative steps catalyzed by the tailoring cytochrome P450 monooxygenase phmB, the FAD-linked oxidoreductase phmC and the short-chain dehydrogenase/reductase phmF, are further required to afford the final products, phomacin D and phomacin E. This chain is Short-chain dehydrogenase/reductase phmF, found in Phaeosphaeria nodorum (strain SN15 / ATCC MYA-4574 / FGSC 10173) (Glume blotch fungus).